Consider the following 476-residue polypeptide: Rifampicin monooxygenase (476 aa).

The FAD site is built by Thr12, Glu31, Lys32, Gln98, Leu122, and Thr156. Arg196 and Arg213 together coordinate rifampicin. 3 residues coordinate FAD: Asp277, Leu290, and Asn291.

It belongs to the rifampicin monooxygenase family. FAD serves as cofactor.

The enzyme catalyses rifampicin + NADPH + O2 = rifampicin para-naphthoquinone carboxamide + NADP(+) + H2O + H(+). It carries out the reaction rifampicin + NADH + O2 = rifampicin para-naphthoquinone carboxamide + NAD(+) + H2O + H(+). The catalysed reaction is rifamycin SV + NADPH + O2 = rifamycin SV para-naphthoquinone carboxamide + NADP(+) + H2O. It catalyses the reaction rifamycin SV + NADH + O2 = rifamycin SV para-naphthoquinone carboxamide + NAD(+) + H2O. Functionally, monooxygenase that can modify rifampicin, thereby inactivating its antibiotic activity. Inactivates a broad range of rifamycin antibiotics. This Streptomyces venezuelae (strain ATCC 10712 / CBS 650.69 / DSM 40230 / JCM 4526 / NBRC 13096 / PD 04745) protein is Rifampicin monooxygenase.